The sequence spans 1083 residues: Carbamoyl phosphate synthase large chain (1083 aa).

The segment at 1-402 (MPRRDDIKKI…SFQKALRGLE (402 aa)) is carboxyphosphate synthetic domain. The ATP site is built by arginine 129, arginine 169, glycine 175, glycine 176, glutamate 208, isoleucine 210, glutamate 215, glycine 241, valine 242, histidine 243, glutamine 285, and glutamate 299. Positions 133 to 328 (KQAMDKIGLD…IAKIAAKLAV (196 aa)) constitute an ATP-grasp 1 domain. Positions 285, 299, and 301 each coordinate Mg(2+). 3 residues coordinate Mn(2+): glutamine 285, glutamate 299, and asparagine 301. The tract at residues 403–557 (VGAFGFGSDP…YSTYESETEV (155 aa)) is oligomerization domain. A carbamoyl phosphate synthetic domain region spans residues 558–944 (PAKGDKKRVV…AFAKSQLAAG (387 aa)). The ATP-grasp 2 domain occupies 683–878 (SSLIDELGLR…VANLATKVMA (196 aa)). 10 residues coordinate ATP: arginine 719, arginine 758, leucine 760, glutamate 765, glycine 790, valine 791, histidine 792, serine 793, glutamine 833, and glutamate 849. Mg(2+) contacts are provided by glutamine 833, glutamate 849, and asparagine 851. Positions 833, 849, and 851 each coordinate Mn(2+). In terms of domain architecture, MGS-like spans 945-1083 (TVLPESGKIF…SLQRRYAQNV (139 aa)). The tract at residues 945–1083 (TVLPESGKIF…SLQRRYAQNV (139 aa)) is allosteric domain.

Belongs to the CarB family. In terms of assembly, composed of two chains; the small (or glutamine) chain promotes the hydrolysis of glutamine to ammonia, which is used by the large (or ammonia) chain to synthesize carbamoyl phosphate. Tetramer of heterodimers (alpha,beta)4. The cofactor is Mg(2+). Mn(2+) is required as a cofactor.

The enzyme catalyses hydrogencarbonate + L-glutamine + 2 ATP + H2O = carbamoyl phosphate + L-glutamate + 2 ADP + phosphate + 2 H(+). It carries out the reaction hydrogencarbonate + NH4(+) + 2 ATP = carbamoyl phosphate + 2 ADP + phosphate + 2 H(+). Its pathway is amino-acid biosynthesis; L-arginine biosynthesis; carbamoyl phosphate from bicarbonate: step 1/1. It functions in the pathway pyrimidine metabolism; UMP biosynthesis via de novo pathway; (S)-dihydroorotate from bicarbonate: step 1/3. In terms of biological role, large subunit of the glutamine-dependent carbamoyl phosphate synthetase (CPSase). CPSase catalyzes the formation of carbamoyl phosphate from the ammonia moiety of glutamine, carbonate, and phosphate donated by ATP, constituting the first step of 2 biosynthetic pathways, one leading to arginine and/or urea and the other to pyrimidine nucleotides. The large subunit (synthetase) binds the substrates ammonia (free or transferred from glutamine from the small subunit), hydrogencarbonate and ATP and carries out an ATP-coupled ligase reaction, activating hydrogencarbonate by forming carboxy phosphate which reacts with ammonia to form carbamoyl phosphate. The protein is Carbamoyl phosphate synthase large chain of Rhodopirellula baltica (strain DSM 10527 / NCIMB 13988 / SH1).